Reading from the N-terminus, the 138-residue chain is Transmembrane protein 170A (138 aa).

At Met-1–Val-44 the chain is on the lumenal side. Asn-26 is a glycosylation site (N-linked (GlcNAc...) asparagine). Residues Phe-45–Phe-65 traverse the membrane as a helical segment. Topologically, residues Thr-66–Ser-79 are cytoplasmic. A helical membrane pass occupies residues Leu-80–Ala-100. The Lumenal portion of the chain corresponds to Gly-101–Met-110. A helical membrane pass occupies residues Ile-111–Phe-131. Over Leu-132–Leu-138 the chain is Cytoplasmic.

The protein belongs to the TMEM170 family.

The protein localises to the endoplasmic reticulum membrane. Its subcellular location is the nucleus envelope. May regulate membrane morphogenesis in the endoplasmic reticulum (ER) by promoting ER sheet formation at the expense of ER tubules. The sequence is that of Transmembrane protein 170A (TMEM170A) from Gallus gallus (Chicken).